Consider the following 1673-residue polypeptide: NBPF family member NBPF26 (1673 aa).

4 consecutive EGF-like domains span residues 24-63 (HALQ…EYCQ), 64-102 (HRDP…EDCQ), 105-143 (TPHP…KECQ), and 144-180 (WTDA…QKCE). Intrachain disulfides connect Cys-28/Cys-41, Cys-35/Cys-51, Cys-53/Cys-62, Cys-68/Cys-79, Cys-73/Cys-90, Cys-92/Cys-101, Cys-109/Cys-121, Cys-115/Cys-131, Cys-133/Cys-142, Cys-148/Cys-159, Cys-153/Cys-168, Cys-170/Cys-179, Cys-186/Cys-198, Cys-192/Cys-207, Cys-209/Cys-218, Cys-225/Cys-236, and Cys-230/Cys-246. An EGF-like 5; calcium-binding domain is found at 182–219 (DVNECDIPGHCQHGGTCLNLPGSYQCQCLQGFTGQYCD). The 38-residue stretch at 221–258 (LYVPCAHSPCVNGGTCRQTGDFTFECNCLPVPDSTSSA) folds into the EGF-like 6 domain. A coiled-coil region spans residues 337–381 (RQFKEEKLAEQLKQAEELRQYKVLVHSQERELTQLKEKLREGRDA). Disordered stretches follow at residues 423-463 (KLSP…KVPE), 713-734 (EKVQ…EVPE), and 782-828 (WEDA…EGYS). The span at 427 to 443 (ENDEDEDEDVQVEEDEK) shows a compositional bias: acidic residues. Olduvai domains lie at 427–521 (ENDE…NILP), 698–790 (ENDN…HIIP), 791–879 (ENES…ATGP), 882–937 (SREL…VDMD), 938–1029 (EIEK…PSCP), 1032–1104 (SGEL…PSCP), 1107–1162 (SREL…LDVD), 1163–1255 (RIKK…RSKK), 1256–1348 (ERRR…PSCP), 1351–1423 (SREL…PSCP), 1426–1481 (SREL…LDVD), 1482–1574 (RIKK…RSKK), and 1575–1673 (ERRR…IFPQ). Residues 452 to 463 (EVQKTEESKVPE) are compositionally biased toward basic and acidic residues. Composition is skewed to acidic residues over residues 792–801 (NESDDEEEEE) and 812–824 (ESEE…ESWD). A disordered region spans residues 1242–1280 (KGKGKKRRGRRSKKERRRGRKEGEEDQNPPCPRLSRELL). Residues 1243–1261 (GKGKKRRGRRSKKERRRGR) are compositionally biased toward basic residues. Residues 1561-1594 (KGKGKKRRGRRSKKERRRGRKEGEEDQNPPCPRL) are disordered. The span at 1562-1580 (GKGKKRRGRRSKKERRRGR) shows a compositional bias: basic residues.

Belongs to the NBPF family.

It localises to the cytoplasm. This chain is NBPF family member NBPF26, found in Homo sapiens (Human).